A 261-amino-acid polypeptide reads, in one-letter code: Proteasome subunit beta type-2 (261 aa).

A propeptide spans 1 to 29 (MAGLSFDNYQRNNFLAENSHTQPKATSTG) (removed in mature form). T30 serves as the catalytic Nucleophile.

The protein belongs to the peptidase T1B family. The 26S proteasome consists of a 20S proteasome core and two 19S regulatory subunits. The 20S proteasome core is composed of 28 subunits that are arranged in four stacked rings, resulting in a barrel-shaped structure. The two end rings are each formed by seven alpha subunits, and the two central rings are each formed by seven beta subunits. The catalytic chamber with the active sites is on the inside of the barrel.

It is found in the cytoplasm. The protein localises to the nucleus. It catalyses the reaction Cleavage of peptide bonds with very broad specificity.. In terms of biological role, the proteasome degrades poly-ubiquitinated proteins in the cytoplasm and in the nucleus. It is essential for the regulated turnover of proteins and for the removal of misfolded proteins. The proteasome is a multicatalytic proteinase complex that is characterized by its ability to cleave peptides with Arg, Phe, Tyr, Leu, and Glu adjacent to the leaving group at neutral or slightly basic pH. It has an ATP-dependent proteolytic activity. The sequence is that of Proteasome subunit beta type-2 (PUP1) from Saccharomyces cerevisiae (strain ATCC 204508 / S288c) (Baker's yeast).